A 314-amino-acid chain; its full sequence is Homoserine kinase (314 aa).

95–105 (PHSRGLGSSAS) is an ATP binding site.

The protein belongs to the GHMP kinase family. Homoserine kinase subfamily.

Its subcellular location is the cytoplasm. The catalysed reaction is L-homoserine + ATP = O-phospho-L-homoserine + ADP + H(+). It functions in the pathway amino-acid biosynthesis; L-threonine biosynthesis; L-threonine from L-aspartate: step 4/5. In terms of biological role, catalyzes the ATP-dependent phosphorylation of L-homoserine to L-homoserine phosphate. This is Homoserine kinase from Rhodococcus opacus (strain B4).